Here is a 761-residue protein sequence, read N- to C-terminus: MRYNQFSYIPTKPNEAFEELKGLGFPLNKKNSDKANLEAFLRHSFLNQTDTDYALSLLIVDAKTDALTFFKSNSDLTLENLQWIYLQLLGFVPFVDFKDPKAFLQDINFPVSYDNIFQSLHHLLACRGKSGNTLIDQLVADGLLHADNHYHFFNGKSLATFNTNQLIREVVYVEISLDTMSSGEHDLVKVNIIRPTTEHTIPTMMTASPYHQGINDPAADQKTYQMEGALAVKQPKHIQVDTKPFKEEVKHPSKLPISPATESFTHIDSYSLNDYFLSRGFANIYVSGVGTAGSTGFMTSGDYQQIQSFKAVIDWLNGKVTAFTSHKRDKQVKADWSNGLVATTGKSYLGTMSTGLATTGVEGLKVIIAEAAISTWYDYYRENGLVCSPGGYPGEDLDVLTELTYSRNLLAGDYIKNNDCYQALLNEQSKAIDRQSGDYNQYWHDRNYLTHVNNVKSRVVYTHGLQDWNVKPRHVYKVFNALPQTIKKHLFLHQGQHVYMHNWQSIDFRESMNALLSQELLGIDNHFQLEEVIWQDNTTEQTWQVLDAFGGNHQEQIGLGDSKKLIDNHYDKEAFDTYCKDFNVFKNDLFKGNNKTNQITINLPLKKNYLLNGQCKLHLRVKTSDKKAILSAQILDYGPKKRFKDTPTIKFLNSLDNGKNFAREALRELPFTKDHYRVISKGVLNLQNRTDLLTIEAIEPEQWFDIEFSLQPSIYQLSKGDNLRIILYTTDFEHTIRDNASYSITVDLSQSYLTIPTNQGN.

Catalysis depends on charge relay system residues S347, D467, and H497.

This sequence belongs to the peptidase S15 family. In terms of assembly, homodimer.

The protein resides in the cytoplasm. The catalysed reaction is Hydrolyzes Xaa-Pro-|- bonds to release unblocked, N-terminal dipeptides from substrates including Ala-Pro-|-p-nitroanilide and (sequentially) Tyr-Pro-|-Phe-Pro-|-Gly-Pro-|-Ile.. Functionally, removes N-terminal dipeptides sequentially from polypeptides having unsubstituted N-termini provided that the penultimate residue is proline. In Streptococcus agalactiae serotype III (strain NEM316), this protein is Xaa-Pro dipeptidyl-peptidase.